The chain runs to 336 residues: MVPKVGINGFGRIGRVVLRNALETGAVEVVALNDPFIEPHYAEYMFKYDSTHGRFKGDIKVDGKDLVIDGKRIKFYQERDPANIPWKDSGAEYIVESTGVFTTTEKASAHFKGGAKKVIISAPSADAPMYVMGVNEDTYAGANVISNASCTTNCLAPLAKTLNDKFTIVEGLMTAIHAYTASQKTVDGPSSKDWRGGRAAAQNLIPSSTGAAKAVGKVIPELAGKVTGMSVRVPTVNVSLVDFTVRFAKDVTYDEVKAAIKEASEGPLKGILAYTEDDIVSTDILTDPHSSTFDAKAGIALNKNFVKVMSWYDNEYGYSRRVVDLIVYVSKKDAGQ.

Residues 12-13 (RI), aspartate 34, and arginine 79 each bind NAD(+). D-glyceraldehyde 3-phosphate is bound by residues 149–151 (SCT), threonine 180, 209–210 (TG), and arginine 232. Cysteine 150 serves as the catalytic Nucleophile. Asparagine 314 contributes to the NAD(+) binding site.

The protein belongs to the glyceraldehyde-3-phosphate dehydrogenase family. As to quaternary structure, homotetramer.

It localises to the cytoplasm. It carries out the reaction D-glyceraldehyde 3-phosphate + phosphate + NAD(+) = (2R)-3-phospho-glyceroyl phosphate + NADH + H(+). It participates in carbohydrate degradation; glycolysis; pyruvate from D-glyceraldehyde 3-phosphate: step 1/5. Its activity is regulated as follows. Inhibited by koningic acid through the interaction of cysteine residues with koningic acid even at very low concentrations. This is Glyceraldehyde-3-phosphate dehydrogenase 1 (gpd1) from Trichoderma koningii (Hypocrea koningii).